The primary structure comprises 447 residues: N-succinylarginine dihydrolase (447 aa).

Substrate is bound by residues A19–S28, N110, and H137–R138. Residue E174 is part of the active site. R212 contributes to the substrate binding site. The active site involves H248. Residues D250 and N359 each coordinate substrate. Residue C365 is the Nucleophile of the active site.

The protein belongs to the succinylarginine dihydrolase family. Homodimer.

The catalysed reaction is N(2)-succinyl-L-arginine + 2 H2O + 2 H(+) = N(2)-succinyl-L-ornithine + 2 NH4(+) + CO2. The protein operates within amino-acid degradation; L-arginine degradation via AST pathway; L-glutamate and succinate from L-arginine: step 2/5. Catalyzes the hydrolysis of N(2)-succinylarginine into N(2)-succinylornithine, ammonia and CO(2). This Escherichia coli O1:K1 / APEC protein is N-succinylarginine dihydrolase.